Reading from the N-terminus, the 740-residue chain is MEDELRCPTCKQLYANPVLLPCFHALCLGCALDIQTPYSPGSALPGAVNGAGAASAAGHNGLHGNGGGAGGGAAAPVTNPNGPGTRHSSHSSAASTASSNTGSESVTSDQDQSDKVSIFSEADSGVVCCSNTSRPVSYAGTGLLPGVGNVVAPPGAAYCLTCPLCRKLVFFDDGGVRNLPTYRAMEAIVDRFCAREALRCQMCETDPKVASLICEQCEIRYCDACRELTHPARGPLAKHTLVKPRGAAQQRESVCGEHEETLSQYCLSCKAPACGLCIGELRHQAHDVQSINVTCKAQKTELSHNLQQLSEKARSTTEFIQRLKGMSDKVTESCMEFERLVHAQCEALIQAIHDRREYLLEAIRMDKDTKIRILKDQQSNCTGKLQQTTGLIQFCIEALKETDSAAFLQVGSMLINRVTNTDMTWHQEVTNAAPRVSPIVDLTLDDAALARAIDNLNFIQMRAVKDGDERCPAAPMTPTILPSDCSAENNSVTVAWQPPNHSFVEGYVLELDDGSGGEFREVYCGKETICTVDGLHFNSMYNARVKAFNSAGEGEYSELIGLQTAEVAWFTFDPVLSGGAGSGLIFSKNNATVSVEGWEHRVALGSVGFSRGVHYWEFTIDNYTADTDPAFGVARIDVARNKMLGKDEKSFAMYIDRQRSWFQHNSIHERRVEGGITTGSTIGVLLDLERHTLSFLVNEMPQGSVAFRDLYGVFYPAVSINRGVTLTMHTAMDAPKMDYF.

The RING-type; degenerate zinc finger occupies 7 to 30 (CPTCKQLYANPVLLPCFHALCLGC). The span at 64–73 (GNGGGAGGGA) shows a compositional bias: gly residues. Residues 64–114 (GNGGGAGGGAAAPVTNPNGPGTRHSSHSSAASTASSNTGSESVTSDQDQSD) form a disordered region. A compositionally biased stretch (low complexity) spans 74-105 (AAPVTNPNGPGTRHSSHSSAASTASSNTGSES). The B box-type 1; atypical zinc finger occupies 195–244 (REALRCQMCETDPKVASLICEQCEIRYCDACRELTHPARGPLAKHTLVKP). Zn(2+) is bound by residues Cys200, Cys203, Cys225, His230, Cys255, His258, Cys277, and His283. The B box-type 2 zinc finger occupies 250-291 (QRESVCGEHEETLSQYCLSCKAPACGLCIGELRHQAHDVQSI). Positions 294–324 (TCKAQKTELSHNLQQLSEKARSTTEFIQRLK) form a coiled coil. Residues 399–459 (LKETDSAAFL…ARAIDNLNFI (61 aa)) form the COS domain. The Fibronectin type-III domain occupies 474-567 (APMTPTILPS…ELIGLQTAEV (94 aa)). The B30.2/SPRY domain maps to 549-736 (NSAGEGEYSE…TMHTAMDAPK (188 aa)).

The protein belongs to the TRIM/RBCC family. Interacts (via fibronectin type-III domain) with pico. Interacts (via SPRY domain) with netrin receptor fra.

Its subcellular location is the cell projection. It is found in the axon. The protein resides in the perikaryon. The catalysed reaction is S-ubiquitinyl-[E2 ubiquitin-conjugating enzyme]-L-cysteine + [acceptor protein]-L-lysine = [E2 ubiquitin-conjugating enzyme]-L-cysteine + N(6)-ubiquitinyl-[acceptor protein]-L-lysine.. The protein operates within protein modification; protein ubiquitination. Its function is as follows. E3 ubiquitin-protein ligase activity. During embryonic and larval development, regulates the pattern of axonal projections of class IV nociceptive sensory neurons (C4da) downstream of netrin receptor fra. Regulates fine-scale topography of C4da axon terminals upon neuronal activity. During eye development, consolidates the attachment of R8 photoreceptor growth cones to the target medulla layer, probably downstream of fra. This chain is E3 ubiquitin-protein ligase TRIM9, found in Drosophila melanogaster (Fruit fly).